We begin with the raw amino-acid sequence, 175 residues long: PE-PGRS family protein PE_PGRS8 (175 aa).

Positions Met-1 to Ala-93 constitute a PE domain.

Belongs to the mycobacterial PE family. PGRS subfamily.

It is found in the secreted. Its subcellular location is the cell wall. The protein localises to the cell surface. This chain is PE-PGRS family protein PE_PGRS8, found in Mycobacterium tuberculosis (strain ATCC 25618 / H37Rv).